Reading from the N-terminus, the 247-residue chain is tRNA uridine(34) hydroxylase (247 aa).

The region spanning 124-218 is the Rhodanese domain; that stretch reads TKQDVIVIDT…YLEDTQNKNN (95 aa). Residue C178 is the Cysteine persulfide intermediate of the active site.

Belongs to the TrhO family.

It catalyses the reaction uridine(34) in tRNA + AH2 + O2 = 5-hydroxyuridine(34) in tRNA + A + H2O. Functionally, catalyzes oxygen-dependent 5-hydroxyuridine (ho5U) modification at position 34 in tRNAs. This chain is tRNA uridine(34) hydroxylase, found in Rickettsia africae (strain ESF-5).